The primary structure comprises 31 residues: U8-ctenitoxin-Co1a (31 aa).

Intrachain disulfides connect C4–C18 and C11–C24.

As to expression, expressed by the venom gland.

Its subcellular location is the secreted. Functionally, blocks voltage-gated sodium channels (Nav). The sequence is that of U8-ctenitoxin-Co1a from Ctenus ornatus (Brazilian spider).